Consider the following 338-residue polypeptide: Lipoate-protein ligase A (338 aa).

Positions 29 to 216 (SPNQRVLFLW…AFFAYYDEQV (188 aa)) constitute a BPL/LPL catalytic domain. Residues R71, 76-79 (GAVF), and K134 contribute to the ATP site. Residue K134 coordinates (R)-lipoate.

Belongs to the LplA family. As to quaternary structure, monomer.

Its subcellular location is the cytoplasm. The catalysed reaction is L-lysyl-[lipoyl-carrier protein] + (R)-lipoate + ATP = N(6)-[(R)-lipoyl]-L-lysyl-[lipoyl-carrier protein] + AMP + diphosphate + H(+). Its pathway is protein modification; protein lipoylation via exogenous pathway; protein N(6)-(lipoyl)lysine from lipoate: step 1/2. It participates in protein modification; protein lipoylation via exogenous pathway; protein N(6)-(lipoyl)lysine from lipoate: step 2/2. In terms of biological role, catalyzes both the ATP-dependent activation of exogenously supplied lipoate to lipoyl-AMP and the transfer of the activated lipoyl onto the lipoyl domains of lipoate-dependent enzymes. The chain is Lipoate-protein ligase A from Yersinia pseudotuberculosis serotype O:1b (strain IP 31758).